The chain runs to 184 residues: Photosystem I assembly protein Ycf3 (184 aa).

3 TPR repeats span residues 31 to 64, 68 to 101, and 131 to 164; these read AFAY…DEDQ, SYTL…NSNL, and MEIS…APDN.

It belongs to the Ycf3 family.

The protein localises to the plastid. It is found in the chloroplast thylakoid membrane. Functionally, essential for the assembly of the photosystem I (PSI) complex. May act as a chaperone-like factor to guide the assembly of the PSI subunits. The chain is Photosystem I assembly protein Ycf3 from Thalassiosira pseudonana (Marine diatom).